The sequence spans 666 residues: tRNA 5-methylaminomethyl-2-thiouridine biosynthesis bifunctional protein MnmC (666 aa).

The segment at 1–253 (MSSPFVPIIT…KRHMICAHYE (253 aa)) is tRNA (mnm(5)s(2)U34)-methyltransferase. The FAD-dependent cmnm(5)s(2)U34 oxidoreductase stretch occupies residues 283–666 (VGGGLAGCFI…FLRKKIIQGP (384 aa)).

In the N-terminal section; belongs to the methyltransferase superfamily. tRNA (mnm(5)s(2)U34)-methyltransferase family. This sequence in the C-terminal section; belongs to the DAO family. It depends on FAD as a cofactor.

It is found in the cytoplasm. The catalysed reaction is 5-aminomethyl-2-thiouridine(34) in tRNA + S-adenosyl-L-methionine = 5-methylaminomethyl-2-thiouridine(34) in tRNA + S-adenosyl-L-homocysteine + H(+). Its function is as follows. Catalyzes the last two steps in the biosynthesis of 5-methylaminomethyl-2-thiouridine (mnm(5)s(2)U) at the wobble position (U34) in tRNA. Catalyzes the FAD-dependent demodification of cmnm(5)s(2)U34 to nm(5)s(2)U34, followed by the transfer of a methyl group from S-adenosyl-L-methionine to nm(5)s(2)U34, to form mnm(5)s(2)U34. This Legionella pneumophila subsp. pneumophila (strain Philadelphia 1 / ATCC 33152 / DSM 7513) protein is tRNA 5-methylaminomethyl-2-thiouridine biosynthesis bifunctional protein MnmC.